The chain runs to 247 residues: Nodulation protein H (247 aa).

The tract at residues 1–17 (MTHSTLPPQPFAILAMP) is hydrophobic.

Its function is as follows. Required for the formation of sulfated nod factor. Proposed to transfer activated sulfate (PAPS) to a N-acetylglucosamine of the nod factor. The polypeptide is Nodulation protein H (nodH) (Rhizobium meliloti (strain 1021) (Ensifer meliloti)).